The chain runs to 447 residues: Phosphoglucosamine mutase (447 aa).

The active-site Phosphoserine intermediate is the Ser-102. 4 residues coordinate Mg(2+): Ser-102, Asp-241, Asp-243, and Asp-245. At Ser-102 the chain carries Phosphoserine.

The protein belongs to the phosphohexose mutase family. Requires Mg(2+) as cofactor. Activated by phosphorylation.

The enzyme catalyses alpha-D-glucosamine 1-phosphate = D-glucosamine 6-phosphate. Its function is as follows. Catalyzes the conversion of glucosamine-6-phosphate to glucosamine-1-phosphate. The sequence is that of Phosphoglucosamine mutase from Pseudomonas syringae pv. syringae (strain B728a).